A 582-amino-acid polypeptide reads, in one-letter code: UPF0329 protein ECU07_0070 (582 aa).

Residues 326 to 386 (EEKAKSKKKG…KTGKKSKGDQ (61 aa)) form a disordered region. The span at 330–339 (KSKKKGKKKS) shows a compositional bias: basic residues. Residues 344 to 354 (EAKEEEKKESG) show a composition bias toward basic and acidic residues.

The protein belongs to the UPF0329 family.

The polypeptide is UPF0329 protein ECU07_0070 (Encephalitozoon cuniculi (strain GB-M1) (Microsporidian parasite)).